A 152-amino-acid polypeptide reads, in one-letter code: Probable prefoldin subunit 5 (152 aa).

The protein belongs to the prefoldin subunit alpha family. In terms of assembly, heterohexamer of two PFD-alpha type and four PFD-beta type subunits.

Functionally, binds specifically to cytosolic chaperonin (c-CPN) and transfers target proteins to it. Binds to nascent polypeptide chain and promotes folding in an environment in which there are many competing pathways for nonnative proteins. This is Probable prefoldin subunit 5 (pfd-5) from Caenorhabditis elegans.